The sequence spans 446 residues: Exodeoxyribonuclease 7 large subunit (446 aa).

It belongs to the XseA family. As to quaternary structure, heterooligomer composed of large and small subunits.

Its subcellular location is the cytoplasm. The enzyme catalyses Exonucleolytic cleavage in either 5'- to 3'- or 3'- to 5'-direction to yield nucleoside 5'-phosphates.. Its function is as follows. Bidirectionally degrades single-stranded DNA into large acid-insoluble oligonucleotides, which are then degraded further into small acid-soluble oligonucleotides. The protein is Exodeoxyribonuclease 7 large subunit of Streptococcus pyogenes serotype M6 (strain ATCC BAA-946 / MGAS10394).